Reading from the N-terminus, the 640-residue chain is 1-deoxy-D-xylulose-5-phosphate synthase (640 aa).

Residues His-78 and 119 to 121 (GHS) contribute to the thiamine diphosphate site. Residue Asp-151 coordinates Mg(2+). Thiamine diphosphate-binding positions include 152 to 153 (GA), Asn-180, Tyr-289, and Glu-371. Asn-180 serves as a coordination point for Mg(2+).

It belongs to the transketolase family. DXPS subfamily. Homodimer. Mg(2+) serves as cofactor. The cofactor is thiamine diphosphate.

The enzyme catalyses D-glyceraldehyde 3-phosphate + pyruvate + H(+) = 1-deoxy-D-xylulose 5-phosphate + CO2. Its pathway is metabolic intermediate biosynthesis; 1-deoxy-D-xylulose 5-phosphate biosynthesis; 1-deoxy-D-xylulose 5-phosphate from D-glyceraldehyde 3-phosphate and pyruvate: step 1/1. Catalyzes the acyloin condensation reaction between C atoms 2 and 3 of pyruvate and glyceraldehyde 3-phosphate to yield 1-deoxy-D-xylulose-5-phosphate (DXP). The polypeptide is 1-deoxy-D-xylulose-5-phosphate synthase (Bartonella henselae (strain ATCC 49882 / DSM 28221 / CCUG 30454 / Houston 1) (Rochalimaea henselae)).